The sequence spans 425 residues: Histidine--tRNA ligase (425 aa).

This sequence belongs to the class-II aminoacyl-tRNA synthetase family. As to quaternary structure, homodimer.

It is found in the cytoplasm. The enzyme catalyses tRNA(His) + L-histidine + ATP = L-histidyl-tRNA(His) + AMP + diphosphate + H(+). In Shewanella sp. (strain MR-4), this protein is Histidine--tRNA ligase.